Here is a 2211-residue protein sequence, read N- to C-terminus: Orsellinic acid synthase (2211 aa).

The interval 44–246 (TFREQVSDAI…TVAVVHSLYH (203 aa)) is N-terminal acylcarrier protein transacylase domain (SAT). Residues 380 to 805 (WDDIAIVGMA…GSNAAVIIGE (426 aa)) enclose the Ketosynthase family 3 (KS3) domain. Catalysis depends on for beta-ketoacyl synthase activity residues C549, H684, and H724. The tract at residues 910-1228 (VFIFSGQGSQ…QLTTLKKNVP (319 aa)) is malonyl-CoA:ACP transacylase (MAT) domain. S1006 (for acyl/malonyl transferase activity) is an active-site residue. Residues 1309–1440 (HAIQKLSHGA…GVVKQSNMAS (132 aa)) form an N-terminal hotdog fold region. The 321-residue stretch at 1309–1629 (HAIQKLSHGA…FQHVKIPLIE (321 aa)) folds into the PKS/mFAS DH domain. The tract at residues 1334–1573 (EFIEGHLVCG…GATTLRAPVV (240 aa)) is product template (PT) domain. The active-site Proton acceptor; for dehydratase activity is H1339. A C-terminal hotdog fold region spans residues 1473 to 1629 (VQVFSKRAMY…FQHVKIPLIE (157 aa)). Residue D1537 is the Proton donor; for dehydratase activity of the active site. Carrier domains lie at 1681–1755 (AAPE…EALS) and 1787–1865 (STVD…VKRP). An O-(pantetheine 4'-phosphoryl)serine modification is found at S1715. The segment at 1755–1786 (SPTPVGNDVDNDSPTPGSERGSDSAISTPASV) is disordered. S1824 is subject to O-(pantetheine 4'-phosphoryl)serine. The interval 1937-2204 (SGKSPLFLIH…AAVSAALVDA (268 aa)) is thioesterase (TE) domain.

The catalysed reaction is 3 malonyl-CoA + acetyl-CoA + 2 H(+) = orsellinate + 3 CO2 + 4 CoA. It functions in the pathway secondary metabolite biosynthesis. Non-reducing polyketide synthase; part of the gene cluster that mediates the biosynthesis of the bibenzoquinone oosporein, a metabolite required for fungal virulence that acts by evading host immunity to facilitate fungal multiplication in insects. The non-reducing polyketide synthase OpS1 produces orsellinic acid by condensing acetyl-CoA with 3 malonyl-CoA units. Orsellinic acid is then hydroxylated to benzenetriol by the hydroxylase OpS4. The intermediate is oxidized either nonenzymatically to 5,5'-dideoxy-oosporein or enzymatically to benzenetetrol by the oxidoreductase OpS7. The latter is further dimerized to oosporein by the catalase OpS5. OpS6 probably functions en route for protecting cells against oxidative stress by scavenging any leaked free radical form of benzenetetrol by activating the thiol group of glutathione. The chain is Orsellinic acid synthase from Beauveria bassiana (strain ARSEF 2860) (White muscardine disease fungus).